The primary structure comprises 279 residues: NADPH-dependent 7-cyano-7-deazaguanine reductase (279 aa).

86 to 88 provides a ligand contact to substrate; it reads IES. NADPH is bound at residue 88–89; that stretch reads SK. The active-site Thioimide intermediate is C187. D194 (proton donor) is an active-site residue. 226–227 contacts substrate; it reads HE. 255–256 is an NADPH binding site; it reads RG.

The protein belongs to the GTP cyclohydrolase I family. QueF type 2 subfamily. In terms of assembly, homodimer.

The protein resides in the cytoplasm. It carries out the reaction 7-aminomethyl-7-carbaguanine + 2 NADP(+) = 7-cyano-7-deazaguanine + 2 NADPH + 3 H(+). It functions in the pathway tRNA modification; tRNA-queuosine biosynthesis. Functionally, catalyzes the NADPH-dependent reduction of 7-cyano-7-deazaguanine (preQ0) to 7-aminomethyl-7-deazaguanine (preQ1). This chain is NADPH-dependent 7-cyano-7-deazaguanine reductase, found in Haemophilus influenzae (strain ATCC 51907 / DSM 11121 / KW20 / Rd).